We begin with the raw amino-acid sequence, 196 residues long: MNYPNGQQKVTTNHVVQKQDNRMFSNRGMSLEDDINATNEFYLETNQAVIHKKPTPVQIVNVHYPKRSAAVITEAYFKQASTTDYNGIYKGKYIDFEAKETKNKTSFPLANIHEHQINHMQKVIDQQGICFMLIRFTAHDETYLLDAKALLTFWNLKQDGGKKSIPYDMIRNQSQLIPFHYQKRVDYLAAVDKLYF.

Residues Thr82, Asp84, Glu97, and Gln116 each contribute to the Mg(2+) site.

Belongs to the RecU family. It depends on Mg(2+) as a cofactor.

The protein localises to the cytoplasm. It carries out the reaction Endonucleolytic cleavage at a junction such as a reciprocal single-stranded crossover between two homologous DNA duplexes (Holliday junction).. In terms of biological role, endonuclease that resolves Holliday junction intermediates in genetic recombination. Cleaves mobile four-strand junctions by introducing symmetrical nicks in paired strands. Promotes annealing of linear ssDNA with homologous dsDNA. Required for DNA repair, homologous recombination and chromosome segregation. This Oceanobacillus iheyensis (strain DSM 14371 / CIP 107618 / JCM 11309 / KCTC 3954 / HTE831) protein is Holliday junction resolvase RecU.